Consider the following 226-residue polypeptide: N-(5'-phosphoribosyl)anthranilate isomerase (226 aa).

This sequence belongs to the TrpF family.

It catalyses the reaction N-(5-phospho-beta-D-ribosyl)anthranilate = 1-(2-carboxyphenylamino)-1-deoxy-D-ribulose 5-phosphate. It functions in the pathway amino-acid biosynthesis; L-tryptophan biosynthesis; L-tryptophan from chorismate: step 3/5. The sequence is that of N-(5'-phosphoribosyl)anthranilate isomerase (TRP1) from Candida albicans (strain SC5314 / ATCC MYA-2876) (Yeast).